Here is a 342-residue protein sequence, read N- to C-terminus: MQAIDNLTSAPGNTSLCTRDYKITQVLFPLLYTVLFFVGLITNSLAMRIFFQIRSKSNFIIFLKNTVISDLLMILTFPFKILSDAKLGAGPLRTFVCQVTSVIFYFTMYISISFLGLITIDRYQKTTRPFKTSNPKNLLGAKILSVLIWAFMFLLSLPNMILTNRRPRDKNVKKCSFLKSEFGLVWHEIVNYICQVIFWINFLIVIVCYTLITKELYRSYVRTRGVGKVPRKKVNVKVFIIIAVFFICFVPFHFARIPYTLSQTRDVFDCAAENTLFYVKESTLWLTSLNACLDPFIYFFLCKSFRNSLISMLKCPNSATSQSQDNRKKEQDGGDPNEETPM.

Over 1–27 the chain is Extracellular; the sequence is MQAIDNLTSAPGNTSLCTRDYKITQVL. 2 N-linked (GlcNAc...) asparagine glycosylation sites follow: N6 and N13. Intrachain disulfides connect C17–C270 and C97–C175. A helical transmembrane segment spans residues 28 to 50; it reads FPLLYTVLFFVGLITNSLAMRIF. The Cytoplasmic segment spans residues 51-61; the sequence is FQIRSKSNFII. A phosphoserine mark is found at S55 and S57. A helical membrane pass occupies residues 62–82; that stretch reads FLKNTVISDLLMILTFPFKIL. Residues 83–97 lie on the Extracellular side of the membrane; it reads SDAKLGAGPLRTFVC. R93, C97, and Y105 together coordinate ADP. A helical membrane pass occupies residues 98–118; the sequence is QVTSVIFYFTMYISISFLGLI. Residues 119-142 are Cytoplasmic-facing; sequence TIDRYQKTTRPFKTSNPKNLLGAK. The helical transmembrane segment at 143–162 threads the bilayer; that stretch reads ILSVLIWAFMFLLSLPNMIL. ADP contacts are provided by residues 156 to 159, 175 to 179, H187, and N191; these read SLPN and CSFLK. At 163 to 185 the chain is on the extracellular side; it reads TNRRPRDKNVKKCSFLKSEFGLV. The chain crosses the membrane as a helical span at residues 186-207; the sequence is WHEIVNYICQVIFWINFLIVIV. Residues 208–233 are Cytoplasmic-facing; it reads CYTLITKELYRSYVRTRGVGKVPRKK. The helical transmembrane segment at 234-259 threads the bilayer; it reads VNVKVFIIIAVFFICFVPFHFARIPY. ADP is bound by residues 256 to 259, Q263, and K280; that span reads RIPY. The Extracellular portion of the chain corresponds to 260–278; the sequence is TLSQTRDVFDCAAENTLFY. The helical transmembrane segment at 279–298 threads the bilayer; the sequence is VKESTLWLTSLNACLDPFIY. Residues 299 to 342 are Cytoplasmic-facing; sequence FFLCKSFRNSLISMLKCPNSATSQSQDNRKKEQDGGDPNEETPM. The segment at 317–342 is disordered; sequence NSATSQSQDNRKKEQDGGDPNEETPM. Acidic residues predominate over residues 333 to 342; that stretch reads GGDPNEETPM.

The protein belongs to the G-protein coupled receptor 1 family.

It localises to the cell membrane. In terms of biological role, receptor for ADP and ATP coupled to G-proteins that inhibit the adenylyl cyclase second messenger system. Required for normal platelet aggregation and blood coagulation. This is P2Y purinoceptor 12 (P2RY12) from Macaca fascicularis (Crab-eating macaque).